The primary structure comprises 178 residues: Large ribosomal subunit protein uL6 (178 aa).

This sequence belongs to the universal ribosomal protein uL6 family. As to quaternary structure, part of the 50S ribosomal subunit.

In terms of biological role, this protein binds to the 23S rRNA, and is important in its secondary structure. It is located near the subunit interface in the base of the L7/L12 stalk, and near the tRNA binding site of the peptidyltransferase center. The protein is Large ribosomal subunit protein uL6 of Buchnera aphidicola subsp. Schizaphis graminum (strain Sg).